A 561-amino-acid chain; its full sequence is Zinc finger protein 394 (561 aa).

The disordered stretch occupies residues 1–61; the sequence is MNSSLTAQRR…NYPAASPDPE (61 aa). Phosphoserine is present on Ser12. Residue Lys40 forms a Glycyl lysine isopeptide (Lys-Gly) (interchain with G-Cter in SUMO2) linkage. An SCAN box domain is found at 64-146; it reads RLHFRQLRYQ…AVVRALQRAL (83 aa). The 76-residue stretch at 155 to 230 folds into the KRAB domain; it reads VTFEDTAVSL…LQEAFQGKRP (76 aa). Residues 182–201 are disordered; sequence ESAQKDSGSTVPPSLESRVE. Glycyl lysine isopeptide (Lys-Gly) (interchain with G-Cter in SUMO2) cross-links involve residues Lys203 and Lys228. Residues 231-285 form a disordered region; it reads LFSKCGSTHEDRVEKQSGDPLPLKLENSPEAEGLNSISDVNKNGSIEGEDSKNNE. Positions 237 to 247 are enriched in basic and acidic residues; the sequence is STHEDRVEKQS. A Glycyl lysine isopeptide (Lys-Gly) (interchain with G-Cter in SUMO2) cross-link involves residue Lys254. Over residues 265 to 274 the composition is skewed to polar residues; that stretch reads NSISDVNKNG. Residue Lys282 forms a Glycyl lysine isopeptide (Lys-Gly) (interchain with G-Cter in SUMO2) linkage. 7 consecutive C2H2-type zinc fingers follow at residues 358–380, 386–408, 414–436, 442–463, 469–491, 497–519, and 525–547; these read YKCG…QRIH, YGCQ…QRTH, YTCL…QSTH, FKCE…QRLH, YKCE…HRIH, YGCS…QRIH, and YKCL…QRIH. Lys443 is covalently cross-linked (Glycyl lysine isopeptide (Lys-Gly) (interchain with G-Cter in SUMO2)).

The protein belongs to the krueppel C2H2-type zinc-finger protein family.

It is found in the nucleus. May be involved in transcriptional regulation. The sequence is that of Zinc finger protein 394 (ZNF394) from Homo sapiens (Human).